A 674-amino-acid polypeptide reads, in one-letter code: DNA ligase (674 aa).

Residues 35–39 (DYDFD), 84–85 (SL), and Glu-118 each bind NAD(+). Lys-120 functions as the N6-AMP-lysine intermediate in the catalytic mechanism. NAD(+) is bound by residues Arg-141, Glu-184, Lys-297, and Lys-321. The Zn(2+) site is built by Cys-415, Cys-418, Cys-433, and Cys-439. In terms of domain architecture, BRCT spans 598–674 (LVNTNFEGLT…ITEDEFDALL (77 aa)).

This sequence belongs to the NAD-dependent DNA ligase family. LigA subfamily. Requires Mg(2+) as cofactor. The cofactor is Mn(2+).

It catalyses the reaction NAD(+) + (deoxyribonucleotide)n-3'-hydroxyl + 5'-phospho-(deoxyribonucleotide)m = (deoxyribonucleotide)n+m + AMP + beta-nicotinamide D-nucleotide.. In terms of biological role, DNA ligase that catalyzes the formation of phosphodiester linkages between 5'-phosphoryl and 3'-hydroxyl groups in double-stranded DNA using NAD as a coenzyme and as the energy source for the reaction. It is essential for DNA replication and repair of damaged DNA. The polypeptide is DNA ligase (Chlorobium phaeovibrioides (strain DSM 265 / 1930) (Prosthecochloris vibrioformis (strain DSM 265))).